A 113-amino-acid polypeptide reads, in one-letter code: Dynein light chain Tctex-type 1 (113 aa).

An N-acetylmethionine modification is found at Met-1. The segment at Gln-41–Ile-113 is interaction with GNB1.

It belongs to the dynein light chain Tctex-type family. As to quaternary structure, homodimer. The cytoplasmic dynein 1 complex consists of two catalytic heavy chains (HCs) and a number of non-catalytic subunits presented by intermediate chains (ICs), light intermediate chains (LICs) and light chains (LCs); the composition seems to vary in respect to the IC, LIC and LC composition. The heavy chain homodimer serves as a scaffold for the probable homodimeric assembly of the respective non-catalytic subunits. The ICs and LICs bind directly to the HC dimer and the LCs assemble on the IC dimer. DYNLT1 and DYNLT3 compete for association with dynein IC (DYNC1I1 or DYNC1I2). Self-associates. Interacts with RHO. Interacts with DYNC1I1 and DYNC1I2. Interacts with DOC2A, DOC2B and SCN10A. Interacts with PVR. Interacts with SVIL isoform 2. Interacts with GNB1; the interaction occurs in presence of guanine nucleotide-binding protein G(T) subunit gamma; the interaction diminishes the association of DYNLT1 with dynein IC (DYNC1I1 or DYNC1I2). Interacts with GNB2, GNB3 and GNB5; the interactions occur in presence of guanine nucleotide-binding protein G(T) subunit gamma. Interacts with ACVR2B and ARHGEF2. Interacts with DNAI4. Interacts with CFAP61. In terms of processing, phosphorylated by BMPR2. The phosphorylation status is proposed to regulate the association with the cytoplasmic dynein complex and may have role in cytoplasmic dynein cargo release. High level in testis (germ cell-specific). Expressed in sperm (at protein level). 200-fold lower in liver, brain, heart, spleen, and kidney. Levels in thymus and two embryonal carcinoma cell lines were several-fold higher than this low constitutive level.

It is found in the golgi apparatus. Its subcellular location is the cytoplasm. It localises to the cytoskeleton. The protein resides in the spindle. Acts as one of several non-catalytic accessory components of the cytoplasmic dynein 1 complex that are thought to be involved in linking dynein to cargos and to adapter proteins that regulate dynein function. Cytoplasmic dynein 1 acts as a motor for the intracellular retrograde motility of vesicles and organelles along microtubules. Binds to transport cargos and is involved in apical cargo transport such as rhodopsin-bearing vesicles in polarized epithelia. May also be a accessory component of axonemal dynein. Plays an important role in male germ cell development and function. Candidate for involvement in male sterility. Its function is as follows. Plays a role in neuronal morphogenesis; the function is independent of cytoplasmic dynein and seems to be coupled to regulation of the actin cytoskeleton by enhancing Rac1 activity. The function in neurogenesis may be regulated by association with a G-protein beta-gamma dimer. May function as a receptor-independent activator of heterotrimeric G-protein signaling; the activation appears to be independent of a nucleotide exchange. Plays a role in regulating neurogenesis; inhibits the genesis of neurons from precursor cells during cortical development presumably by antagonizing ARHGEF2. Unrelated to the role in retrograde microtubule-associated movement may play a role in the dimerization of cytoplasmic proteins/domains such as for ACVR2B. Binds to the cytoplasmic domain of ACVR2B and, in vitro, inhibits ACVR2B signaling. Involved in the regulation of mitotic spindle orientation. This is Dynein light chain Tctex-type 1 (Dynlt1) from Mus musculus (Mouse).